A 316-amino-acid polypeptide reads, in one-letter code: Peroxidase 31 (316 aa).

The signal sequence occupies residues 1–19 (MASLKSLFLLFLFFFTAQS). 4 disulfide bridges follow: Cys-30–Cys-111, Cys-63–Cys-68, Cys-117–Cys-312, and Cys-196–Cys-222. The Proton acceptor role is filled by His-61. Asp-62, Gly-67, Asp-69, and Ser-71 together coordinate Ca(2+). Substrate is bound at residue Pro-159. Heme b is bound at residue His-189. Ser-190 contributes to the Ca(2+) binding site. Residue Asn-206 is glycosylated (N-linked (GlcNAc...) asparagine). Ca(2+) contacts are provided by Asp-236, Thr-239, and Asp-244.

It belongs to the peroxidase family. Classical plant (class III) peroxidase subfamily. It depends on heme b as a cofactor. Ca(2+) serves as cofactor.

The protein resides in the secreted. The catalysed reaction is 2 a phenolic donor + H2O2 = 2 a phenolic radical donor + 2 H2O. Its function is as follows. Removal of H(2)O(2), oxidation of toxic reductants, biosynthesis and degradation of lignin, suberization, auxin catabolism, response to environmental stresses such as wounding, pathogen attack and oxidative stress. These functions might be dependent on each isozyme/isoform in each plant tissue. This is Peroxidase 31 (PER31) from Arabidopsis thaliana (Mouse-ear cress).